A 473-amino-acid chain; its full sequence is Lactococcin A secretion protein LcnD-like (473 aa).

Residues 1–21 (MFDKKLLESSELYDKRYRNFS) are Cytoplasmic-facing. Residues 22 to 44 (TLIILPLFILLVGGVIFTFFAHK) form a helical membrane-spanning segment. Over 45–473 (ELTVISTGSI…FLDKIMGRTS (429 aa)) the chain is Extracellular.

It belongs to the membrane fusion protein (MFP) (TC 8.A.1) family.

The protein resides in the cell membrane. In terms of biological role, involved in the secretion of a lactococcin. This chain is Lactococcin A secretion protein LcnD-like (lcnD), found in Lactococcus lactis subsp. lactis (strain IL1403) (Streptococcus lactis).